Reading from the N-terminus, the 321-residue chain is tRNA(Ile)-lysidine synthase (321 aa).

An ATP-binding site is contributed by 30–35 (SGGSDS).

The protein belongs to the tRNA(Ile)-lysidine synthase family.

Its subcellular location is the cytoplasm. It catalyses the reaction cytidine(34) in tRNA(Ile2) + L-lysine + ATP = lysidine(34) in tRNA(Ile2) + AMP + diphosphate + H(+). Its function is as follows. Ligates lysine onto the cytidine present at position 34 of the AUA codon-specific tRNA(Ile) that contains the anticodon CAU, in an ATP-dependent manner. Cytidine is converted to lysidine, thus changing the amino acid specificity of the tRNA from methionine to isoleucine. The polypeptide is tRNA(Ile)-lysidine synthase (Chlamydia trachomatis serovar A (strain ATCC VR-571B / DSM 19440 / HAR-13)).